A 176-amino-acid chain; its full sequence is Ribosome rescue factor SmrB (176 aa).

A Smr domain is found at 98–173; that stretch reads LDLHGLNQYQ…NDAAIMVIIE (76 aa).

It belongs to the SmrB family. In terms of assembly, associates with collided ribosomes, but not with correctly translating polysomes.

In terms of biological role, acts as a ribosome collision sensor. Detects stalled/collided disomes (pairs of ribosomes where the leading ribosome is stalled and a second ribosome has collided with it) and endonucleolytically cleaves mRNA at the 5' boundary of the stalled ribosome. Stalled/collided disomes form a new interface (primarily via the 30S subunits) that binds SmrB. Cleaved mRNA becomes available for tmRNA ligation, leading to ribosomal subunit dissociation and rescue of stalled ribosomes. The sequence is that of Ribosome rescue factor SmrB from Buchnera aphidicola subsp. Schizaphis graminum (strain Sg).